Consider the following 196-residue polypeptide: Retinol-binding protein 4 (196 aa).

The first 21 residues, 1–21 (MAYTWRALLLLALAFLGSSMA), serve as a signal peptide directing secretion. 3 disulfide bridges follow: Cys-25/Cys-181, Cys-91/Cys-195, and Cys-141/Cys-150. Gln-119 is a substrate binding site.

This sequence belongs to the calycin superfamily. Lipocalin family. As to quaternary structure, interacts with TTR. Interaction with TTR prevents its loss by filtration through the kidney glomeruli. Interacts with STRA6.

The protein resides in the secreted. Retinol-binding protein that mediates retinol transport in blood plasma. Delivers retinol from the liver stores to the peripheral tissues. Transfers the bound all-trans retinol to STRA6, that then facilitates retinol transport across the cell membrane. This is Retinol-binding protein 4 (RBP4) from Gallus gallus (Chicken).